A 98-amino-acid polypeptide reads, in one-letter code: Integration host factor subunit beta (98 aa).

Belongs to the bacterial histone-like protein family. In terms of assembly, heterodimer of an alpha and a beta chain.

Functionally, this protein is one of the two subunits of integration host factor, a specific DNA-binding protein that functions in genetic recombination as well as in transcriptional and translational control. This is Integration host factor subunit beta from Pseudomonas fluorescens (strain SBW25).